Consider the following 401-residue polypeptide: Bifunctional enzyme IspD/IspF (401 aa).

Positions 1-234 (MQKPPRTAAI…SRLTAALGDI (234 aa)) are 2-C-methyl-D-erythritol 4-phosphate cytidylyltransferase. The interval 235 to 401 (RTGTGYDVHA…SPWGAEGQAS (167 aa)) is 2-C-methyl-D-erythritol 2,4-cyclodiphosphate synthase. A divalent metal cation-binding residues include D241 and H243. Residues 241-243 (DVH) and 267-268 (HS) each bind 4-CDP-2-C-methyl-D-erythritol 2-phosphate. H275 contributes to the a divalent metal cation binding site. Residues 289–291 (DIG), 365–368 (TTSE), F372, and R375 each bind 4-CDP-2-C-methyl-D-erythritol 2-phosphate.

The protein in the N-terminal section; belongs to the IspD/TarI cytidylyltransferase family. IspD subfamily. It in the C-terminal section; belongs to the IspF family. The cofactor is a divalent metal cation.

The catalysed reaction is 2-C-methyl-D-erythritol 4-phosphate + CTP + H(+) = 4-CDP-2-C-methyl-D-erythritol + diphosphate. It carries out the reaction 4-CDP-2-C-methyl-D-erythritol 2-phosphate = 2-C-methyl-D-erythritol 2,4-cyclic diphosphate + CMP. It functions in the pathway isoprenoid biosynthesis; isopentenyl diphosphate biosynthesis via DXP pathway; isopentenyl diphosphate from 1-deoxy-D-xylulose 5-phosphate: step 2/6. It participates in isoprenoid biosynthesis; isopentenyl diphosphate biosynthesis via DXP pathway; isopentenyl diphosphate from 1-deoxy-D-xylulose 5-phosphate: step 4/6. Functionally, bifunctional enzyme that catalyzes the formation of 4-diphosphocytidyl-2-C-methyl-D-erythritol from CTP and 2-C-methyl-D-erythritol 4-phosphate (MEP) (IspD), and catalyzes the conversion of 4-diphosphocytidyl-2-C-methyl-D-erythritol 2-phosphate (CDP-ME2P) to 2-C-methyl-D-erythritol 2,4-cyclodiphosphate (ME-CPP) with a corresponding release of cytidine 5-monophosphate (CMP) (IspF). This is Bifunctional enzyme IspD/IspF from Rhodopseudomonas palustris (strain HaA2).